The sequence spans 312 residues: Ribonuclease HIII (312 aa).

The region spanning 95–311 is the RNase H type-2 domain; sequence FNCIGSDEAG…REKAQKILKP (217 aa). A divalent metal cation contacts are provided by aspartate 101, glutamate 102, and aspartate 206.

It belongs to the RNase HII family. RnhC subfamily. Mn(2+) serves as cofactor. Mg(2+) is required as a cofactor.

It is found in the cytoplasm. The catalysed reaction is Endonucleolytic cleavage to 5'-phosphomonoester.. Its function is as follows. Endonuclease that specifically degrades the RNA of RNA-DNA hybrids. This is Ribonuclease HIII from Staphylococcus aureus (strain MSSA476).